Consider the following 609-residue polypeptide: Spore coat protein homolog 1 (609 aa).

An N-terminal signal peptide occupies residues 1–17 (MKSLLFVVFIFLTTTYA). 3 N-linked (GlcNAc...) asparagine glycosylation sites follow: N82, N397, and N440. The tract at residues 527 to 547 (TVTQVPEAPGTDGTPSESTAW) is disordered. The GPI-anchor amidated serine moiety is linked to residue S584. Positions 585 to 609 (SSSIKRTPCILPLVILASTLFASFF) are cleaved as a propeptide — removed in mature form.

It is found in the cell membrane. May play a role in cell adhesion. This is Spore coat protein homolog 1 from Rhizopus delemar (strain RA 99-880 / ATCC MYA-4621 / FGSC 9543 / NRRL 43880) (Mucormycosis agent).